We begin with the raw amino-acid sequence, 235 residues long: Endonuclease V (235 aa).

Mg(2+) is bound by residues Asp47 and Asp115.

Belongs to the endonuclease V family. Mg(2+) is required as a cofactor.

The protein resides in the cytoplasm. It catalyses the reaction Endonucleolytic cleavage at apurinic or apyrimidinic sites to products with a 5'-phosphate.. Its function is as follows. DNA repair enzyme involved in the repair of deaminated bases. Selectively cleaves double-stranded DNA at the second phosphodiester bond 3' to a deoxyinosine leaving behind the intact lesion on the nicked DNA. The protein is Endonuclease V of Myxococcus xanthus (strain DK1622).